The sequence spans 367 residues: Auxin efflux carrier component 8 (367 aa).

Over 1 to 6 the chain is Extracellular; it reads MISWLD. Residues 7–27 traverse the membrane as a helical segment; the sequence is IYHVVSATVPLYVSMTLGFLS. Residues 28 to 38 are Cytoplasmic-facing; it reads ARHLKLFSPEQ. A helical transmembrane segment spans residues 39–59; sequence CAGINKFVAKFSIPLLSFQII. Ile-51 provides a ligand contact to (indol-3-yl)acetate. The Extracellular segment spans residues 60–69; sequence SENNPFKMSP. A helical membrane pass occupies residues 70–90; the sequence is KLILSDILQKFLVVVVLAMVL. Residues 91-105 lie on the Cytoplasmic side of the membrane; that stretch reads RFWHPTGGRGGKLGW. The helical transmembrane segment at 106–126 threads the bilayer; it reads VITGLSISVLPNTLILGMPIL. (indol-3-yl)acetate-binding residues include Asn-117 and Leu-119. Residues 127-136 lie on the Extracellular side of the membrane; that stretch reads SAIYGDEAAS. Residues 137–157 traverse the membrane as a helical segment; it reads ILEQIVVLQSLIWYTILLFLF. Tyr-150 provides a ligand contact to (indol-3-yl)acetate. Topologically, residues 158-227 are cytoplasmic; the sequence is ELNAARALPS…LIINPNTYAT (70 aa). A disordered region spans residues 168–194; the sequence is SGASLEHTGNDQEEANIEDEPKEEEDE. Positions 178–194 are enriched in acidic residues; the sequence is DQEEANIEDEPKEEEDE. A helical transmembrane segment spans residues 228-248; the sequence is LIGIIWATLHFRLGWNLPEMI. Topologically, residues 249-251 are extracellular; that stretch reads DKS. A helical membrane pass occupies residues 252 to 272; that stretch reads IHLLSDGGLGMAMFSLGLFMA. At 273–288 the chain is on the cytoplasmic side; it reads SQSSIIACGTKMAIIT. The helical transmembrane segment at 289–309 threads the bilayer; the sequence is MLLKFVLGPALMIASAYCIRL. The Extracellular segment spans residues 310 to 312; that stretch reads KST. A helical transmembrane segment spans residues 313 to 333; the sequence is LFKVAILQAALPQGVVPFVFA. (indol-3-yl)acetate is bound by residues Val-327 and Val-328. Over 334-344 the chain is Cytoplasmic; it reads KEYNLHPEIIS. A helical transmembrane segment spans residues 345 to 365; it reads TGVIFGMLIALPTTLAYYFLL. Residues 366–367 lie on the Extracellular side of the membrane; it reads DL.

The protein belongs to the auxin efflux carrier (TC 2.A.69.1) family. In terms of assembly, homodimer. Expressed in veins of mature leaves. Strongly expressed in pollen.

The protein resides in the endoplasmic reticulum membrane. Its subcellular location is the cell membrane. Auxin efflux carrier activity is competitively inhibited by naptalamate (N-1-naphthylphthalamic acid, NPA). In terms of biological role, acts as a component of the auxin efflux carrier. Component of the intracellular auxin-transport pathway in the male gametophyte. Involved in the regulation of auxin homeostasis in pollen. Involved in the efflux of auxin from the endoplasmic reticulum into the cytoplasm. Binds auxins including indole-3-acetic acid (IAA), naphthaleneacetic acid (NAA) and the herbicide 2,4-dichlorophenoxyacetic acid (2,4-D), but barely indole-3-butyric acid (IBA) and 2-phenylacetic acid (PAA). PIN5 and PIN8 may have an antagonistic/compensatory activity. Involved in the control of vein patterning. Redundantly with PIN6, inhibits the vein-formation-promoting functions of PIN5. PIN5, PIN6, and PIN8 control vein network geometry, but they are expressed in mutually exclusive domains of leaf vascular cells. In Arabidopsis thaliana (Mouse-ear cress), this protein is Auxin efflux carrier component 8.